The sequence spans 134 residues: D-ribose pyranase (134 aa).

Residue H20 is the Proton donor of the active site. Substrate-binding positions include D28, H101, and 123–125 (YCN).

Belongs to the RbsD / FucU family. RbsD subfamily. As to quaternary structure, homodecamer.

Its subcellular location is the cytoplasm. It catalyses the reaction beta-D-ribopyranose = beta-D-ribofuranose. Its pathway is carbohydrate metabolism; D-ribose degradation; D-ribose 5-phosphate from beta-D-ribopyranose: step 1/2. Its function is as follows. Catalyzes the interconversion of beta-pyran and beta-furan forms of D-ribose. The chain is D-ribose pyranase from Pseudomonas fluorescens (strain SBW25).